Reading from the N-terminus, the 103-residue chain is Small ribosomal subunit protein uS10 (103 aa).

It belongs to the universal ribosomal protein uS10 family. As to quaternary structure, part of the 30S ribosomal subunit.

In terms of biological role, involved in the binding of tRNA to the ribosomes. This is Small ribosomal subunit protein uS10 from Shewanella halifaxensis (strain HAW-EB4).